Consider the following 271-residue polypeptide: Enolase-phosphatase E1 (271 aa).

2 residues coordinate Mg(2+): Asp-18 and Glu-20. Residues 144-145 and Lys-194 contribute to the substrate site; that span reads SS. A Mg(2+)-binding site is contributed by Asp-221.

This sequence belongs to the HAD-like hydrolase superfamily. MasA/MtnC family. In terms of assembly, monomer. Mg(2+) is required as a cofactor.

It localises to the cytoplasm. It is found in the nucleus. It carries out the reaction 5-methylsulfanyl-2,3-dioxopentyl phosphate + H2O = 1,2-dihydroxy-5-(methylsulfanyl)pent-1-en-3-one + phosphate. It participates in amino-acid biosynthesis; L-methionine biosynthesis via salvage pathway; L-methionine from S-methyl-5-thio-alpha-D-ribose 1-phosphate: step 3/6. It functions in the pathway amino-acid biosynthesis; L-methionine biosynthesis via salvage pathway; L-methionine from S-methyl-5-thio-alpha-D-ribose 1-phosphate: step 4/6. Bifunctional enzyme that catalyzes the enolization of 2,3-diketo-5-methylthiopentyl-1-phosphate (DK-MTP-1-P) into the intermediate 2-hydroxy-3-keto-5-methylthiopentenyl-1-phosphate (HK-MTPenyl-1-P), which is then dephosphorylated to form the acireductone 1,2-dihydroxy-3-keto-5-methylthiopentene (DHK-MTPene). This is Enolase-phosphatase E1 from Candida albicans (strain WO-1) (Yeast).